The sequence spans 185 residues: MKLEIHKQLEEKMNGTIDALKFEFGTIRAGRANAQMLDKIRVDYYGTPTPINQIGAISVPEPRILMISPWDKSAMHEIEKAIANSDLGLNPSNDGEVIRLSVPALTEERRKELAKKASKAAEEFKVRIRNERRDANEKIKKMEKGGELTEDELKKAQDEVQKMTDKFIKEIDTLLSKKEKDIMEV.

Belongs to the RRF family.

Its subcellular location is the cytoplasm. In terms of biological role, responsible for the release of ribosomes from messenger RNA at the termination of protein biosynthesis. May increase the efficiency of translation by recycling ribosomes from one round of translation to another. The polypeptide is Ribosome-recycling factor (Clostridioides difficile (strain 630) (Peptoclostridium difficile)).